Consider the following 593-residue polypeptide: Isocitrate dehydrogenase kinase/phosphatase (593 aa).

Residues 324 to 330 and lysine 345 contribute to the ATP site; that span reads APGIRGL. Aspartate 380 is a catalytic residue.

This sequence belongs to the AceK family.

The protein resides in the cytoplasm. The catalysed reaction is L-seryl-[isocitrate dehydrogenase] + ATP = O-phospho-L-seryl-[isocitrate dehydrogenase] + ADP + H(+). In terms of biological role, bifunctional enzyme which can phosphorylate or dephosphorylate isocitrate dehydrogenase (IDH) on a specific serine residue. This is a regulatory mechanism which enables bacteria to bypass the Krebs cycle via the glyoxylate shunt in response to the source of carbon. When bacteria are grown on glucose, IDH is fully active and unphosphorylated, but when grown on acetate or ethanol, the activity of IDH declines drastically concomitant with its phosphorylation. The polypeptide is Isocitrate dehydrogenase kinase/phosphatase (Dechloromonas aromatica (strain RCB)).